We begin with the raw amino-acid sequence, 601 residues long: Elongation factor 4 (601 aa).

The tr-type G domain occupies 7-189; it reads DNIRNFSIVA…AIVKRLPPPK (183 aa). Residues 19-24 and 136-139 each bind GTP; these read DHGKST and NKVD.

This sequence belongs to the TRAFAC class translation factor GTPase superfamily. Classic translation factor GTPase family. LepA subfamily.

It localises to the cell inner membrane. It carries out the reaction GTP + H2O = GDP + phosphate + H(+). Required for accurate and efficient protein synthesis under certain stress conditions. May act as a fidelity factor of the translation reaction, by catalyzing a one-codon backward translocation of tRNAs on improperly translocated ribosomes. Back-translocation proceeds from a post-translocation (POST) complex to a pre-translocation (PRE) complex, thus giving elongation factor G a second chance to translocate the tRNAs correctly. Binds to ribosomes in a GTP-dependent manner. This is Elongation factor 4 from Methylorubrum populi (strain ATCC BAA-705 / NCIMB 13946 / BJ001) (Methylobacterium populi).